The chain runs to 205 residues: Guanylate kinase (205 aa).

One can recognise a Guanylate kinase-like domain in the interval 6-185; that stretch reads GLLIVLSGPS…ACERIKAIVV (180 aa). 13–20 lines the ATP pocket; sequence GPSGVGKG.

The protein belongs to the guanylate kinase family.

It is found in the cytoplasm. It carries out the reaction GMP + ATP = GDP + ADP. In terms of biological role, essential for recycling GMP and indirectly, cGMP. The polypeptide is Guanylate kinase (Bacillus anthracis).